Consider the following 472-residue polypeptide: Aspartyl/glutamyl-tRNA(Asn/Gln) amidotransferase subunit B (472 aa).

This sequence belongs to the GatB/GatE family. GatB subfamily. Heterotrimer of A, B and C subunits.

The catalysed reaction is L-glutamyl-tRNA(Gln) + L-glutamine + ATP + H2O = L-glutaminyl-tRNA(Gln) + L-glutamate + ADP + phosphate + H(+). The enzyme catalyses L-aspartyl-tRNA(Asn) + L-glutamine + ATP + H2O = L-asparaginyl-tRNA(Asn) + L-glutamate + ADP + phosphate + 2 H(+). Functionally, allows the formation of correctly charged Asn-tRNA(Asn) or Gln-tRNA(Gln) through the transamidation of misacylated Asp-tRNA(Asn) or Glu-tRNA(Gln) in organisms which lack either or both of asparaginyl-tRNA or glutaminyl-tRNA synthetases. The reaction takes place in the presence of glutamine and ATP through an activated phospho-Asp-tRNA(Asn) or phospho-Glu-tRNA(Gln). This chain is Aspartyl/glutamyl-tRNA(Asn/Gln) amidotransferase subunit B, found in Campylobacter jejuni subsp. doylei (strain ATCC BAA-1458 / RM4099 / 269.97).